The chain runs to 357 residues: MDPIFQSLQTVVDRYDELNEQLADPEIAGDGQKYMALSKEAGEMRETVETYLHYQQVLQDIADAEDLLDDAEMAPLAKEDLNTLKPEKEALESQLKILMLPKDPNDDKNIIMEIRGAAGGDESSLFAADLLDMYRRYAEKQRWTLSIIDETLTEVGGYKEVAVMITGDNVYSKLKFESGAHRVQRVPATETQGRVHTSTATVGVMPEFQEIDFELAESDLEEEFFRSGGAGGQNVNKVSTAVRLVHKPTGIMVKMQEERTQIKNRDKARKLLASRVYDFYAQQNEAEYAEKRKSAVGTGDRSERIRTYNYPQNRVTDHRIGLTLNKLDRVMNGELGEVIDALVIADQTAKLAELNNA.

At Q233 the chain carries N5-methylglutamine.

It belongs to the prokaryotic/mitochondrial release factor family. Methylated by PrmC. Methylation increases the termination efficiency of RF1.

It is found in the cytoplasm. Functionally, peptide chain release factor 1 directs the termination of translation in response to the peptide chain termination codons UAG and UAA. The protein is Peptide chain release factor 1 of Leuconostoc citreum (strain KM20).